The chain runs to 79 residues: ATP synthase subunit c (79 aa).

Transmembrane regions (helical) follow at residues Met-11–Leu-31 and Phe-53–Tyr-73.

This sequence belongs to the ATPase C chain family. In terms of assembly, F-type ATPases have 2 components, F(1) - the catalytic core - and F(0) - the membrane proton channel. F(1) has five subunits: alpha(3), beta(3), gamma(1), delta(1), epsilon(1). F(0) has three main subunits: a(1), b(2) and c(10-14). The alpha and beta chains form an alternating ring which encloses part of the gamma chain. F(1) is attached to F(0) by a central stalk formed by the gamma and epsilon chains, while a peripheral stalk is formed by the delta and b chains.

The protein localises to the cell inner membrane. Functionally, f(1)F(0) ATP synthase produces ATP from ADP in the presence of a proton or sodium gradient. F-type ATPases consist of two structural domains, F(1) containing the extramembraneous catalytic core and F(0) containing the membrane proton channel, linked together by a central stalk and a peripheral stalk. During catalysis, ATP synthesis in the catalytic domain of F(1) is coupled via a rotary mechanism of the central stalk subunits to proton translocation. Key component of the F(0) channel; it plays a direct role in translocation across the membrane. A homomeric c-ring of between 10-14 subunits forms the central stalk rotor element with the F(1) delta and epsilon subunits. This chain is ATP synthase subunit c, found in Proteus mirabilis (strain HI4320).